The primary structure comprises 340 residues: Beta-hexosaminidase (340 aa).

Substrate is bound by residues aspartate 60, arginine 68, arginine 127, and 157–158; that span reads KH. Catalysis depends on histidine 170, which acts as the Proton donor/acceptor. Aspartate 242 acts as the Nucleophile in catalysis.

This sequence belongs to the glycosyl hydrolase 3 family. NagZ subfamily.

The protein resides in the cytoplasm. The enzyme catalyses Hydrolysis of terminal non-reducing N-acetyl-D-hexosamine residues in N-acetyl-beta-D-hexosaminides.. The protein operates within cell wall biogenesis; peptidoglycan recycling. Its function is as follows. Plays a role in peptidoglycan recycling by cleaving the terminal beta-1,4-linked N-acetylglucosamine (GlcNAc) from peptide-linked peptidoglycan fragments, giving rise to free GlcNAc, anhydro-N-acetylmuramic acid and anhydro-N-acetylmuramic acid-linked peptides. This chain is Beta-hexosaminidase, found in Glaesserella parasuis serovar 5 (strain SH0165) (Haemophilus parasuis).